The following is a 206-amino-acid chain: 2,3-bisphosphoglycerate-dependent phosphoglycerate mutase (206 aa).

Substrate contacts are provided by residues R9–N16, T22–G23, R61, E88–Y91, K99, R115–R116, and G159–N160. H10 functions as the Tele-phosphohistidine intermediate in the catalytic mechanism. The active-site Proton donor/acceptor is the E88.

This sequence belongs to the phosphoglycerate mutase family. BPG-dependent PGAM subfamily. Homodimer.

The enzyme catalyses (2R)-2-phosphoglycerate = (2R)-3-phosphoglycerate. It participates in carbohydrate degradation; glycolysis; pyruvate from D-glyceraldehyde 3-phosphate: step 3/5. Functionally, catalyzes the interconversion of 2-phosphoglycerate and 3-phosphoglycerate. The protein is 2,3-bisphosphoglycerate-dependent phosphoglycerate mutase of Methylocella silvestris (strain DSM 15510 / CIP 108128 / LMG 27833 / NCIMB 13906 / BL2).